Consider the following 391-residue polypeptide: GTPase Obg (391 aa).

The Obg domain maps to 1 to 159; it reads MKFVDEARIL…RELMLELMLL (159 aa). The OBG-type G domain occupies 160–333; that stretch reads ADVGMLGMPN…LCWDIMEFMK (174 aa). GTP-binding positions include 166–173, 191–195, 213–216, 283–286, and 314–316; these read GMPNAGKS, FTTLV, DIPG, NKVD, and SAI. Residues S173 and T193 each coordinate Mg(2+).

This sequence belongs to the TRAFAC class OBG-HflX-like GTPase superfamily. OBG GTPase family. Monomer. The cofactor is Mg(2+).

The protein localises to the cytoplasm. In terms of biological role, an essential GTPase which binds GTP, GDP and possibly (p)ppGpp with moderate affinity, with high nucleotide exchange rates and a fairly low GTP hydrolysis rate. Plays a role in control of the cell cycle, stress response, ribosome biogenesis and in those bacteria that undergo differentiation, in morphogenesis control. This Photorhabdus laumondii subsp. laumondii (strain DSM 15139 / CIP 105565 / TT01) (Photorhabdus luminescens subsp. laumondii) protein is GTPase Obg.